The following is a 255-amino-acid chain: tRNA (guanine-N(1)-)-methyltransferase (255 aa).

S-adenosyl-L-methionine-binding positions include glycine 113 and 133 to 138 (IGDYVL).

The protein belongs to the RNA methyltransferase TrmD family. In terms of assembly, homodimer.

It is found in the cytoplasm. The catalysed reaction is guanosine(37) in tRNA + S-adenosyl-L-methionine = N(1)-methylguanosine(37) in tRNA + S-adenosyl-L-homocysteine + H(+). Functionally, specifically methylates guanosine-37 in various tRNAs. This chain is tRNA (guanine-N(1)-)-methyltransferase, found in Salmonella schwarzengrund (strain CVM19633).